A 221-amino-acid chain; its full sequence is Ribosomal RNA small subunit methyltransferase G (221 aa).

Residues G90, L95, V141–E142, and R154 each bind S-adenosyl-L-methionine.

The protein belongs to the methyltransferase superfamily. RNA methyltransferase RsmG family.

It is found in the cytoplasm. The catalysed reaction is guanosine(527) in 16S rRNA + S-adenosyl-L-methionine = N(7)-methylguanosine(527) in 16S rRNA + S-adenosyl-L-homocysteine. In terms of biological role, specifically methylates the N7 position of guanine in position 527 of 16S rRNA. The chain is Ribosomal RNA small subunit methyltransferase G from Polaromonas naphthalenivorans (strain CJ2).